A 100-amino-acid polypeptide reads, in one-letter code: uncharacterized protein (100 aa).

This is an uncharacterized protein from Bacillus anthracis.